The chain runs to 84 residues: Neurotoxin BmK-M10 (84 aa).

The first 19 residues, 1-19 (MNYLVMISFALLLMKGVES), serve as a signal peptide directing secretion. Residues 21–83 (RDAYIAKPEN…VPIRVPGKCQ (63 aa)) enclose the LCN-type CS-alpha/beta domain. Disulfide bonds link Cys31–Cys82, Cys35–Cys55, Cys41–Cys65, and Cys45–Cys67. Arg84 is a propeptide (removed by a carboxypeptidase).

In terms of tissue distribution, expressed by the venom gland.

It is found in the secreted. Its function is as follows. Binds to voltage-dependent sodium channels (Nav) and voltage-dependent delayed rectifier potassium channels and inhibits the inactivation of the activated channels, thereby blocking neuronal transmission. Administration to mice at a dosage of 0.8 mg/kg produces an analgesic effect. This is Neurotoxin BmK-M10 from Olivierus martensii (Manchurian scorpion).